Consider the following 796-residue polypeptide: Pleckstrin homology domain-containing family H member 3 (796 aa).

An N-terminal signal peptide occupies residues 1 to 18 (MPLPGGLWWLLCCRRGFT). The tract at residues 28-71 (ELSGDGDEDEDDETFELRTPSPAGGGRGSLDVTLTQPTRNGPIS) is disordered. Residues 29–41 (LSGDGDEDEDDET) show a composition bias toward acidic residues. At serine 30 the chain carries Phosphoserine. Residues 59–68 (VTLTQPTRNG) are compositionally biased toward polar residues. The 105-residue stretch at 95–199 (DIIVKGWLYR…WGVALREVIA (105 aa)) folds into the PH domain. Residues 237 to 399 (HTSSALYAPL…PSLAEISALS (163 aa)) enclose the MyTH4 domain. One can recognise an FERM domain in the interval 404 to 757 (LLCTVHCPGA…ANPSPERPCR (354 aa)). Asparagine 474 is a glycosylation site (N-linked (GlcNAc...) asparagine). 2 disordered regions span residues 557 to 584 (PLLDRLLPPPIPPREQPPCPTRRPPPSA) and 598 to 625 (KRRAERARRGGTGRSTGSTAQVGGGGAS). Positions 563–583 (LPPPIPPREQPPCPTRRPPPS) are enriched in pro residues. Basic residues predominate over residues 598–608 (KRRAERARRGG). Arginine 638 carries the omega-N-methylarginine modification. The segment at 750–796 (PSPERPCRSGSSSGPPSQDLPDTSPPSQHQVLEEPQGQSGCLKQLQD) is disordered. The span at 757–766 (RSGSSSGPPS) shows a compositional bias: low complexity. Residues 774-796 (PPSQHQVLEEPQGQSGCLKQLQD) show a composition bias toward polar residues.

This Mus musculus (Mouse) protein is Pleckstrin homology domain-containing family H member 3 (Plekhh3).